Consider the following 238-residue polypeptide: Ribosomal RNA small subunit methyltransferase G (238 aa).

Residues glycine 106, leucine 111, 157–158 (IE), and arginine 170 each bind S-adenosyl-L-methionine.

The protein belongs to the methyltransferase superfamily. RNA methyltransferase RsmG family.

The protein resides in the cytoplasm. It catalyses the reaction guanosine(527) in 16S rRNA + S-adenosyl-L-methionine = N(7)-methylguanosine(527) in 16S rRNA + S-adenosyl-L-homocysteine. Functionally, specifically methylates the N7 position of guanine in position 527 of 16S rRNA. The polypeptide is Ribosomal RNA small subunit methyltransferase G (Psychrobacter cryohalolentis (strain ATCC BAA-1226 / DSM 17306 / VKM B-2378 / K5)).